The primary structure comprises 283 residues: Tropomyosin (283 aa).

Residues 1–283 adopt a coiled-coil conformation; it reads MDAIKKKMQA…LDSAFVELIL (283 aa).

It belongs to the tropomyosin family. In terms of assembly, homodimer.

Functionally, tropomyosin, in association with the troponin complex, plays a central role in the calcium dependent regulation of muscle contraction. This chain is Tropomyosin, found in Locusta migratoria (Migratory locust).